The following is a 201-amino-acid chain: Recombination protein RecR (201 aa).

The segment at 57–72 adopts a C4-type zinc-finger fold; it reads CADCRTFTEQPVCTIC. The Toprim domain occupies 81–176; sequence GQICVVESPA…MASRIAHGVP (96 aa).

The protein belongs to the RecR family.

May play a role in DNA repair. It seems to be involved in an RecBC-independent recombinational process of DNA repair. It may act with RecF and RecO. In Sodalis glossinidius (strain morsitans), this protein is Recombination protein RecR.